The sequence spans 982 residues: Ubiquitin carboxyl-terminal hydrolase 15 (982 aa).

Positions 7–118 (VDLETQRSEV…SQQPIARKVV (112 aa)) constitute a DUSP domain. Positions 288–933 (CGLSNLGNTC…AAYVLFYQRQ (646 aa)) constitute a USP domain. Cys297 functions as the Nucleophile in the catalytic mechanism. Residues 623 to 695 (TEENDGSLHC…DNDSENGLCT (73 aa)) form a disordered region. The segment covering 655 to 672 (METDEPDDESSQDQELPS) has biased composition (acidic residues). His891 acts as the Proton acceptor in catalysis. The interval 950–982 (QGASAATGAPHESDEESNEDENDIENENCMHTN) is disordered. Residues 962 to 975 (SDEESNEDENDIEN) show a composition bias toward acidic residues.

The protein belongs to the peptidase C19 family.

It localises to the cytoplasm. Its subcellular location is the nucleus. It catalyses the reaction Thiol-dependent hydrolysis of ester, thioester, amide, peptide and isopeptide bonds formed by the C-terminal Gly of ubiquitin (a 76-residue protein attached to proteins as an intracellular targeting signal).. Functionally, hydrolase that removes conjugated ubiquitin from target proteins and regulates various pathways such as the TGF-beta receptor signaling and NF-kappa-B pathways. Acts as a key regulator of TGF-beta receptor signaling pathway, but the precise mechanism is still unclear: according to a report, acts by promoting deubiquitination of monoubiquitinated R-SMADs, thereby alleviating inhibition of R-SMADs and promoting activation of TGF-beta target genes. According to another reports, regulates the TGF-beta receptor signaling pathway by mediating deubiquitination and stabilization of tgfbr1, leading to an enhanced TGF-beta signal. May also regulate gene expression and/or DNA repair through the deubiquitination of histone H2B. Involved in endosome organization by mediating deubiquitination of rnf26 target(s), releasing vesicles that are restrained in the perinuclear region. The chain is Ubiquitin carboxyl-terminal hydrolase 15 (usp15) from Xenopus tropicalis (Western clawed frog).